A 164-amino-acid chain; its full sequence is SVVVDTNGQPVSNGADAYYLVPVSHGHAGLALAKIGNEAEPRAVVLDPHHRPGLPVRFESPLRINIIKESYFLNIKFGPSSSDSGVWDVIQQDPIGLAVKVTDTKSLLGPFKVEKEGEGYKIVYYPERGQTGLDIGLVHRNDKYYLAVKDGEPCVFKIRKATDE.

Belongs to the protease inhibitor I3 (leguminous Kunitz-type inhibitor) family. In terms of assembly, monomer.

Its subcellular location is the secreted. Its function is as follows. Inhibits bovine trypsin, human plasma kallikrein and plasmin and weakly bovine chymotrypsin. This Bauhinia bauhinioides (Perlebia bauhinoides) protein is Kunitz-type serine protease inhibitor BbKI.